A 289-amino-acid chain; its full sequence is ATP synthase mitochondrial F1 complex assembly factor 2 (289 aa).

A mitochondrion-targeting transit peptide spans 1 to 40 (MWRRCLRLRDVGRRLLNLPRSGLTASEGLGPKLPTPIRAY). Lysine 133 carries the N6-succinyllysine modification.

It belongs to the ATP12 family. As to quaternary structure, interacts with ATP5F1B; involved in the assembly of the F1 component of the mitochondrial ATP synthase (ATPase). Interacts with FMC1.

The protein localises to the mitochondrion inner membrane. Plays a role in the assembly of the F1 component of the mitochondrial ATP synthase (ATPase). The sequence is that of ATP synthase mitochondrial F1 complex assembly factor 2 (ATPAF2) from Bos taurus (Bovine).